Consider the following 158-residue polypeptide: Glycine/sarcosine/betaine reductase complex component A (158 aa).

The active site involves selenocysteine 44. A non-standard amino acid (selenocysteine) is located at residue selenocysteine 44.

The protein belongs to the GrdA family. In terms of assembly, monomer. Component of the glycine, sarcosine and betaine reductase complexes, together with components B and C.

The enzyme catalyses acetyl phosphate + [thioredoxin]-disulfide + NH4(+) + H2O = [thioredoxin]-dithiol + glycine + phosphate + H(+). It catalyses the reaction acetyl phosphate + methylamine + [thioredoxin]-disulfide + H2O = sarcosine + [thioredoxin]-dithiol + phosphate + H(+). It carries out the reaction acetyl phosphate + trimethylamine + [thioredoxin]-disulfide + H2O = glycine betaine + [thioredoxin]-dithiol + phosphate + H(+). Functionally, in the first step of glycine, betaine and sarcosine reductases, the substrate is bound to component PB via a Schiff base intermediate. Then the PB-activated substrate is nucleophilically attacked by the selenol anion of component PA to transform it to a carboxymethylated selenoether and the respective amine. By action of component PC, acetyl phosphate is formed, leaving component PA in its oxidized state. Finally component PA becomes reduced by the thioredoxin system to start a new catalytic cycle of reductive deamination. The polypeptide is Glycine/sarcosine/betaine reductase complex component A (Alkaliphilus metalliredigens (strain QYMF)).